The primary structure comprises 422 residues: Gamma-glutamyl phosphate reductase (422 aa).

The protein belongs to the gamma-glutamyl phosphate reductase family.

It localises to the cytoplasm. The catalysed reaction is L-glutamate 5-semialdehyde + phosphate + NADP(+) = L-glutamyl 5-phosphate + NADPH + H(+). It participates in amino-acid biosynthesis; L-proline biosynthesis; L-glutamate 5-semialdehyde from L-glutamate: step 2/2. Its function is as follows. Catalyzes the NADPH-dependent reduction of L-glutamate 5-phosphate into L-glutamate 5-semialdehyde and phosphate. The product spontaneously undergoes cyclization to form 1-pyrroline-5-carboxylate. This is Gamma-glutamyl phosphate reductase from Chloroflexus aurantiacus (strain ATCC 29366 / DSM 635 / J-10-fl).